Reading from the N-terminus, the 318-residue chain is Basic leucine zipper (bZIP) transcription factor atfB (318 aa).

The segment at 114–157 (FNSSPPEYAPPKHRSSLSEQSQTDGYGVSTRRRKASAIDQCEQQ) is disordered. The tract at residues 160–199 (REKREKFLERNRLAASKCRQKKKEHTKLLETRFREVSNKK) is basic motif. Positions 160-223 (REKREKFLER…LNLKNEMLRH (64 aa)) constitute a bZIP domain. The segment at 202 to 216 (LESEIEHLRSEVLNL) is leucine-zipper. Positions 275 to 301 (DGPMQLPSEMGSPLDQRRDSEQSIMTE) are disordered.

This sequence belongs to the bZIP family. ATF subfamily.

Its subcellular location is the nucleus. In terms of biological role, transcription factor that acts as a key player in the regulatory circuit that integrates secondary metabolism and cellular response to oxidative stress. Regulates the genes involved in development and stress response through direct binding to their promoters. This Aspergillus flavus (strain ATCC 200026 / FGSC A1120 / IAM 13836 / NRRL 3357 / JCM 12722 / SRRC 167) protein is Basic leucine zipper (bZIP) transcription factor atfB.